We begin with the raw amino-acid sequence, 493 residues long: Aspartyl/glutamyl-tRNA(Asn/Gln) amidotransferase subunit B (493 aa).

The disordered stretch occupies residues 473 to 493 (KSGGKANPKQAADLVNKRLTE).

It belongs to the GatB/GatE family. GatB subfamily. As to quaternary structure, heterotrimer of A, B and C subunits.

It catalyses the reaction L-glutamyl-tRNA(Gln) + L-glutamine + ATP + H2O = L-glutaminyl-tRNA(Gln) + L-glutamate + ADP + phosphate + H(+). The catalysed reaction is L-aspartyl-tRNA(Asn) + L-glutamine + ATP + H2O = L-asparaginyl-tRNA(Asn) + L-glutamate + ADP + phosphate + 2 H(+). In terms of biological role, allows the formation of correctly charged Asn-tRNA(Asn) or Gln-tRNA(Gln) through the transamidation of misacylated Asp-tRNA(Asn) or Glu-tRNA(Gln) in organisms which lack either or both of asparaginyl-tRNA or glutaminyl-tRNA synthetases. The reaction takes place in the presence of glutamine and ATP through an activated phospho-Asp-tRNA(Asn) or phospho-Glu-tRNA(Gln). This chain is Aspartyl/glutamyl-tRNA(Asn/Gln) amidotransferase subunit B, found in Treponema denticola (strain ATCC 35405 / DSM 14222 / CIP 103919 / JCM 8153 / KCTC 15104).